A 132-amino-acid chain; its full sequence is Minor structural pilin EpdB (132 aa).

A propeptide spanning residues 1–4 (MSKG) is cleaved from the precursor. Positions 9–19 (EFIVLFLALLV) match the QXSXEXXXL motif.

In terms of processing, the N-terminus is probably cleaved by the prepilin peptidase EppA, which recognizes the class III signal sequence.

The protein resides in the secreted. The protein localises to the cell surface. Its subcellular location is the fimbrium. Functionally, minor component of the type IV-like pili. Essential for pili formation. This Methanococcus maripaludis (strain DSM 14266 / JCM 13030 / NBRC 101832 / S2 / LL) protein is Minor structural pilin EpdB.